The following is a 372-amino-acid chain: Alanine dehydrogenase 1 (372 aa).

Residue His94 is part of the active site. 170 to 200 contacts NAD(+); the sequence is TYVIFGGGVAATNAANVALGLNAKVIIIELN.

The protein belongs to the AlaDH/PNT family.

It carries out the reaction L-alanine + NAD(+) + H2O = pyruvate + NH4(+) + NADH + H(+). Its pathway is amino-acid degradation; L-alanine degradation via dehydrogenase pathway; NH(3) and pyruvate from L-alanine: step 1/1. In terms of biological role, may play a role in cell wall synthesis as L-alanine is an important constituent of the peptidoglycan layer. This is Alanine dehydrogenase 1 (ald1) from Staphylococcus aureus (strain USA300).